The primary structure comprises 84 residues: Cell division topological specificity factor (84 aa).

Belongs to the MinE family.

In terms of biological role, prevents the cell division inhibition by proteins MinC and MinD at internal division sites while permitting inhibition at polar sites. This ensures cell division at the proper site by restricting the formation of a division septum at the midpoint of the long axis of the cell. This Ralstonia nicotianae (strain ATCC BAA-1114 / GMI1000) (Ralstonia solanacearum) protein is Cell division topological specificity factor.